The chain runs to 63 residues: DNA-directed RNA polymerases I, II, and III subunit RPABC4 (63 aa).

Cysteine 24, cysteine 27, cysteine 41, and cysteine 44 together coordinate Zn(2+). A C4-type zinc finger spans residues 24–44 (CADCGARNTIQAKEVIRCREC).

Belongs to the archaeal Rpo12/eukaryotic RPC10 RNA polymerase subunit family. As to quaternary structure, component of the RNA polymerase I (Pol I), RNA polymerase II (Pol II) and RNA polymerase III (Pol III) complexes consisting of 14, 12 and 17 subunits, respectively.

It localises to the nucleus. DNA-dependent RNA polymerase catalyzes the transcription of DNA into RNA using the four ribonucleoside triphosphates as substrates. Common component of RNA polymerases I, II and III which synthesize ribosomal RNA precursors, mRNA precursors and many functional non-coding RNAs, and a small RNAs, such as 5S rRNA and tRNAs, respectively. This Schizosaccharomyces pombe (strain 972 / ATCC 24843) (Fission yeast) protein is DNA-directed RNA polymerases I, II, and III subunit RPABC4 (rpc10).